The sequence spans 352 residues: Glutamine synthetase cytosolic isozyme (352 aa).

The region spanning 19–98 is the GS beta-grasp domain; it reads FIAEYIWIDA…VMCDTYTPAG (80 aa). Residues 105–352 form the GS catalytic domain; that stretch reads KRCNAAKIFS…TSMIAETTIL (248 aa).

This sequence belongs to the glutamine synthetase family. As to quaternary structure, homooctamer.

Its subcellular location is the cytoplasm. It catalyses the reaction L-glutamate + NH4(+) + ATP = L-glutamine + ADP + phosphate + H(+). This Daucus carota (Wild carrot) protein is Glutamine synthetase cytosolic isozyme (GLN1).